A 452-amino-acid chain; its full sequence is Packaging protein 1 (452 aa).

Residues 1–78 (MLPCRSTGRR…AKPPQRGSLL (78 aa)) are disordered. 173–180 (GPTGCGKS) is an ATP binding site. A DNA-binding region spans residues 442–452 (RAYHVRKNKYQ).

Belongs to the adenoviridae packaging protein 1 family. Homodimer. Part of a genome packaging complex composed of packaging proteins 1, 2 and 3; this complex specifically binds to the packaging sequence on the left end of viral genomic DNA and performs packaging of the viral genome. Interacts with protein 33K.

It localises to the virion. The protein localises to the host nucleus. It is found in the host nucleoplasm. The protein resides in the host nucleolus. Functionally, component of the packaging machinery which encapsidates the viral DNA into preformed capsids and transcriptional activator of the viral major late promoter (MLP). Binds, along with packaging proteins 2 and 3, to the specific packaging sequence on the left end of viral genomic DNA and displays ATPase activity thereby providing the power stroke of the packaging machinery. The activity of packaging protein IVa2 is stimulated by protein 33K which acts as a terminase. May be the protein that pumps DNA into the capsid powered by ATP hydrolysis. Specifically binds to the 5'-CG-3' nucleotides of the repeats making up the packaging sequence. Component of the DEF-A and DEF-B transcription factors that bind downstream elements of the major late promoter (MLP), and stimulate transcription from the MLP after initiation of viral DNA replication. DEF-A is a heterodimer packaging proteins 1 and 2 and DEF-B is a homodimer of packaging protein 1. The chain is Packaging protein 1 from Homo sapiens (Human).